A 188-amino-acid chain; its full sequence is Killer cell lectin-like receptor subfamily G member 1 (188 aa).

The Cytoplasmic segment spans residues 1–33; it reads MADSSIYSTLELPEAPQVQDESRWKLKAVLHRP. The short motif at 5–10 is the ITIM motif element; the sequence is SIYSTL. The chain crosses the membrane as a helical; Signal-anchor for type II membrane protein span at residues 34–56; that stretch reads HLSRFAMVALGLLTVILMSLLMY. Residues 57 to 188 lie on the Extracellular side of the membrane; sequence QRILCCGSKD…LQWICKKVLY (132 aa). Cys75 and Cys86 form a disulfide bridge. N-linked (GlcNAc...) asparagine glycosylation is found at Asn82 and Asn97. Positions 82-184 constitute a C-type lectin domain; the sequence is NGSHCYYFSM…CEVALQWICK (103 aa). 2 disulfide bridges follow: Cys103-Cys183 and Cys162-Cys175.

As to quaternary structure, forms a monomer and homodimer; disulfide-linked. Interacts (via ITIM motif) with PTPN11 and INPP5D. In terms of processing, phosphorylated in response to monoclonal antibody G63 binding and antigenic stimulation. Expressed specifically on natural killer (NK) cells and activated CD8 T-cells. Not detected in spleen, thymus, lymph node, testis, brain or kidney. Not detected on mast cell lines, bone marrow-derived mast cells, or peritoneal mast cells.

It localises to the cell membrane. In terms of biological role, plays an inhibitory role on natural killer (NK) cells and T-cell functions upon binding to their non-MHC ligands. May mediate missing self recognition by binding to a highly conserved site on classical cadherins, enabling it to monitor expression of E-cadherin/CDH1, N-cadherin/CDH2 and R-cadherin/CDH4 on target cells. In Mus musculus (Mouse), this protein is Killer cell lectin-like receptor subfamily G member 1 (Klrg1).